The sequence spans 598 residues: Pentatricopeptide repeat-containing protein At5g14820, mitochondrial (598 aa).

A mitochondrion-targeting transit peptide spans 1 to 98 (MAAAPWLYLS…RGFSSGSSNV (98 aa)). PPR repeat units lie at residues 193-227 (DSRT…GLLT), 229-261 (ETFT…KFKI), 262-292 (GVET…LKER), 296-330 (NMMT…GLKP), 331-365 (DIVA…GPCP), 366-400 (NVRS…GLQP), 401-435 (DAAV…GHPP), 436-470 (DGKT…EIEP), 471-505 (SIHT…GICP), and 506-540 (DDNS…GMKT).

Belongs to the PPR family. P subfamily.

The protein localises to the mitochondrion. In Arabidopsis thaliana (Mouse-ear cress), this protein is Pentatricopeptide repeat-containing protein At5g14820, mitochondrial.